Here is a 360-residue protein sequence, read N- to C-terminus: DNA replication and repair protein RecF (360 aa).

An ATP-binding site is contributed by 30–37 (GHNGSGKT).

This sequence belongs to the RecF family.

It localises to the cytoplasm. The RecF protein is involved in DNA metabolism; it is required for DNA replication and normal SOS inducibility. RecF binds preferentially to single-stranded, linear DNA. It also seems to bind ATP. The chain is DNA replication and repair protein RecF from Actinobacillus pleuropneumoniae serotype 7 (strain AP76).